Here is a 240-residue protein sequence, read N- to C-terminus: MVVMDSPVSGRMADQNIDPNTTTSPSPIEKHVSAIKAISGDEKAPSKEKKNYASKKSTTVIQKSHCFQNSWTFWFDNPSSKSNQVIWGSSLRSLYTFATIEEFWSLYNNIHPPTKWVSGSDLYCFKDKIEPKWEDPICANGGKWTMFFPRATLESNWLNTLLALVGEQFDQGDEICGAVLNFRTRGDRISLWTKKAANEEAQLSIGKQWKELLGYNDTIGFIVHEDAKTLDRDAKRRYTV.

The segment at Met1–Glu29 is disordered. Residues Ile17–Ser26 show a composition bias toward polar residues. EIF4G-binding stretches follow at residues His65–Gln68 and Phe75–His111. MRNA-binding positions include Asn83–Gly88, Lys115, and Trp133–Glu134. The cysteines at positions 138 and 176 are disulfide-linked. Residues Asn159–Gln168 are EIF4G-binding. Residues Arg183 to Arg188 and Lys228 to Arg232 contribute to the mRNA site.

The protein belongs to the eukaryotic initiation factor 4E family. As to quaternary structure, EIF4F is a multi-subunit complex, the composition of which varies with external and internal environmental conditions. It is composed of at least EIF4A, EIF4E and EIF4G. EIF4E is also known to interact with other partners. In higher plants two isoforms of EIF4F have been identified, named isoform EIF4F and isoform EIF(iso)4F. Isoform EIF4F has subunits p220 and p26, whereas isoform EIF(iso)4F has subunits p82 and p28. Post-translationally, according to the redox status, the Cys-138-Cys-176 disulfide bridge may have a role in regulating protein function by affecting its ability to bind capped mRNA.

The protein localises to the nucleus. It is found in the cytoplasm. Its function is as follows. Component of the protein complex eIF4F, which is involved in the recognition of the mRNA cap, ATP-dependent unwinding of 5'-terminal secondary structure and recruitment of mRNA to the ribosome. Recognizes and binds the 7-methylguanosine-containing mRNA cap during an early step in the initiation of protein synthesis and facilitates ribosome binding by inducing the unwinding of the mRNAs secondary structures. The protein is Eukaryotic translation initiation factor 4E-2 of Arabidopsis thaliana (Mouse-ear cress).